The following is a 340-amino-acid chain: Ferredoxin--NADP reductase (340 aa).

7 residues coordinate FAD: D33, Q41, Y46, A86, F120, D286, and T327.

It belongs to the ferredoxin--NADP reductase type 2 family. As to quaternary structure, homodimer. FAD serves as cofactor.

The catalysed reaction is 2 reduced [2Fe-2S]-[ferredoxin] + NADP(+) + H(+) = 2 oxidized [2Fe-2S]-[ferredoxin] + NADPH. The chain is Ferredoxin--NADP reductase from Rickettsia rickettsii (strain Iowa).